The primary structure comprises 358 residues: Peptide chain release factor 1 (358 aa).

Q237 carries the N5-methylglutamine modification.

This sequence belongs to the prokaryotic/mitochondrial release factor family. Methylated by PrmC. Methylation increases the termination efficiency of RF1.

It is found in the cytoplasm. In terms of biological role, peptide chain release factor 1 directs the termination of translation in response to the peptide chain termination codons UAG and UAA. This chain is Peptide chain release factor 1, found in Streptomyces coelicolor (strain ATCC BAA-471 / A3(2) / M145).